The sequence spans 219 residues: Ribose-5-phosphate isomerase A (219 aa).

Substrate is bound by residues 28 to 31, 81 to 84, and 94 to 97; these read TGST, DGAD, and KGGG. Glu103 acts as the Proton acceptor in catalysis. A substrate-binding site is contributed by Lys121.

The protein belongs to the ribose 5-phosphate isomerase family. Homodimer.

The catalysed reaction is aldehydo-D-ribose 5-phosphate = D-ribulose 5-phosphate. It functions in the pathway carbohydrate degradation; pentose phosphate pathway; D-ribose 5-phosphate from D-ribulose 5-phosphate (non-oxidative stage): step 1/1. In terms of biological role, catalyzes the reversible conversion of ribose-5-phosphate to ribulose 5-phosphate. The chain is Ribose-5-phosphate isomerase A from Pectobacterium carotovorum subsp. carotovorum (strain PC1).